A 33-amino-acid polypeptide reads, in one-letter code: Mu-theraphotoxin-Osp1b (33 aa).

3 cysteine pairs are disulfide-bonded: cysteine 2–cysteine 17, cysteine 9–cysteine 22, and cysteine 16–cysteine 29.

Belongs to the neurotoxin 10 (Hwtx-1) family. 22 (Htx-4) subfamily. Expressed by the venom gland.

It localises to the secreted. Its function is as follows. Voltage-gated sodium channel Nav1.7/SCN9A inhibitor. In Orphnaecus sp. (strain Maanghit-Cave/Philippines) (Tarantula spider), this protein is Mu-theraphotoxin-Osp1b.